The following is a 160-amino-acid chain: MESGSGLLVRRIREGTVIDHIPAGRALTVLKILGITGREGARIAVVMNVESRKLGRKDIVKIEGRHLSPEEVDKIALVAPRATINIIHDYRVVAKRRVTVPDIVEGILMCPNPSCITRVGREPVKPRFRVVSRQPLVLQCVYCGTLVSEEDVAEQLAEGG.

Positions 110, 115, 140, and 143 each coordinate Zn(2+).

The protein belongs to the PyrI family. As to quaternary structure, contains catalytic and regulatory chains. Zn(2+) is required as a cofactor.

Its function is as follows. Involved in allosteric regulation of aspartate carbamoyltransferase. The chain is Aspartate carbamoyltransferase regulatory chain from Hyperthermus butylicus (strain DSM 5456 / JCM 9403 / PLM1-5).